Here is a 151-residue protein sequence, read N- to C-terminus: SsrA-binding protein (151 aa).

It belongs to the SmpB family.

It is found in the cytoplasm. Required for rescue of stalled ribosomes mediated by trans-translation. Binds to transfer-messenger RNA (tmRNA), required for stable association of tmRNA with ribosomes. tmRNA and SmpB together mimic tRNA shape, replacing the anticodon stem-loop with SmpB. tmRNA is encoded by the ssrA gene; the 2 termini fold to resemble tRNA(Ala) and it encodes a 'tag peptide', a short internal open reading frame. During trans-translation Ala-aminoacylated tmRNA acts like a tRNA, entering the A-site of stalled ribosomes, displacing the stalled mRNA. The ribosome then switches to translate the ORF on the tmRNA; the nascent peptide is terminated with the 'tag peptide' encoded by the tmRNA and targeted for degradation. The ribosome is freed to recommence translation, which seems to be the essential function of trans-translation. In Campylobacter concisus (strain 13826), this protein is SsrA-binding protein.